The chain runs to 212 residues: Nucleoside diphosphate kinase homolog 5 (212 aa).

An NDK region spans residues 13–145 (EKTLAIIKPD…EREIRFMFPE (133 aa)).

The protein belongs to the NDK family. In terms of assembly, component of the axonemal radial spoke complex 1 (RS1), at least composed of spoke head proteins RSPH1, RSPH3, RSPH9 and the cilia-specific component RSPH4A or sperm-specific component RSPH6A, spoke stalk proteins RSPH14, DNAJB13, DYDC1, ROPN1L and NME5, and the anchor protein IQUB. Interacts with IQUB. Specifically expressed in testis germinal cells.

It is found in the cell projection. Its subcellular location is the cilium. It localises to the cytoplasm. The protein localises to the cytoskeleton. The protein resides in the flagellum axoneme. Functionally, functions as part of axonemal radial spoke complexes that play an important part in the motility of sperm and cilia. Does not seem to have nucleoside diphosphate kinase (NDPK) activity. Confers protection from cell death by BAX and alters the cellular levels of several antioxidant enzymes including GPX5. May play a role in spermiogenesis by increasing the ability of late-stage spermatids to eliminate reactive oxygen species. Exhibits a 3'-5' exonuclease activity with a preference for single-stranded DNA, suggesting roles in DNA proofreading and repair. In Homo sapiens (Human), this protein is Nucleoside diphosphate kinase homolog 5.